The primary structure comprises 321 residues: 4-hydroxy-2-oxoglutarate aldolase, mitochondrial (321 aa).

The transit peptide at 1–23 directs the protein to the mitochondrion; the sequence is MLGPQIWASMRQGLSRGLSRNVK. 71-72 serves as a coordination point for substrate; it reads ST. K190 acts as the Schiff-base intermediate with substrate in catalysis. Substrate contacts are provided by S192 and G216.

It belongs to the DapA family. Homotetramer.

It is found in the mitochondrion. It catalyses the reaction (4S)-4-hydroxy-2-oxoglutarate = glyoxylate + pyruvate. The enzyme catalyses (4R)-4-hydroxy-2-oxoglutarate = glyoxylate + pyruvate. With respect to regulation, inhibited by divalent cations. In terms of biological role, catalyzes the final step in the metabolic pathway of hydroxyproline. This chain is 4-hydroxy-2-oxoglutarate aldolase, mitochondrial (Hoga1), found in Mus musculus (Mouse).